Consider the following 61-residue polypeptide: MTRKALMEKAKKEPKYSTRKVNRCKRCGRARGYMRKFDLCRICFRELAHKGEIPGVKKASW.

Zn(2+) contacts are provided by C24, C27, C40, and C43.

It belongs to the universal ribosomal protein uS14 family. Zinc-binding uS14 subfamily. As to quaternary structure, part of the 30S ribosomal subunit. Contacts proteins S3 and S10. Zn(2+) is required as a cofactor.

Functionally, binds 16S rRNA, required for the assembly of 30S particles and may also be responsible for determining the conformation of the 16S rRNA at the A site. This is Small ribosomal subunit protein uS14 from Halothermothrix orenii (strain H 168 / OCM 544 / DSM 9562).